Consider the following 123-residue polypeptide: uncharacterized protein (123 aa).

The interval 34 to 123 is disordered; that stretch reads PEKISQTVKK…MNRDGGVKKE (90 aa). Composition is skewed to basic and acidic residues over residues 50 to 60, 74 to 100, and 107 to 123; these read KKIDENKDKSP, TAKDAKDTDYQQKAKDAGKKIKEEFSQ, and EETRREGMNRDGGVKKE.

It localises to the mitochondrion. This is an uncharacterized protein from Schizosaccharomyces pombe (strain 972 / ATCC 24843) (Fission yeast).